The chain runs to 81 residues: Photosystem I iron-sulfur center (81 aa).

4Fe-4S ferredoxin-type domains follow at residues 2 to 31 (AHSV…MIPW) and 39 to 68 (IASA…VRVY). [4Fe-4S] cluster-binding residues include Cys-11, Cys-14, Cys-17, Cys-21, Cys-48, Cys-51, Cys-54, and Cys-58.

As to quaternary structure, the eukaryotic PSI reaction center is composed of at least 11 subunits. It depends on [4Fe-4S] cluster as a cofactor.

Its subcellular location is the plastid. The protein resides in the chloroplast thylakoid membrane. It carries out the reaction reduced [plastocyanin] + hnu + oxidized [2Fe-2S]-[ferredoxin] = oxidized [plastocyanin] + reduced [2Fe-2S]-[ferredoxin]. Functionally, apoprotein for the two 4Fe-4S centers FA and FB of photosystem I (PSI); essential for photochemical activity. FB is the terminal electron acceptor of PSI, donating electrons to ferredoxin. The C-terminus interacts with PsaA/B/D and helps assemble the protein into the PSI complex. Required for binding of PsaD and PsaE to PSI. PSI is a plastocyanin-ferredoxin oxidoreductase, converting photonic excitation into a charge separation, which transfers an electron from the donor P700 chlorophyll pair to the spectroscopically characterized acceptors A0, A1, FX, FA and FB in turn. This Psilotum nudum (Whisk fern) protein is Photosystem I iron-sulfur center.